The primary structure comprises 369 residues: 3-dehydroquinate synthase (369 aa).

NAD(+)-binding positions include 72–77, 130–131, Lys-142, and Lys-151; these read SGEKEK and TT. Zn(2+) is bound by residues Glu-184, His-247, and His-264.

It belongs to the sugar phosphate cyclases superfamily. Dehydroquinate synthase family. The cofactor is Co(2+). Zn(2+) is required as a cofactor. NAD(+) serves as cofactor.

Its subcellular location is the cytoplasm. It carries out the reaction 7-phospho-2-dehydro-3-deoxy-D-arabino-heptonate = 3-dehydroquinate + phosphate. The protein operates within metabolic intermediate biosynthesis; chorismate biosynthesis; chorismate from D-erythrose 4-phosphate and phosphoenolpyruvate: step 2/7. Its function is as follows. Catalyzes the conversion of 3-deoxy-D-arabino-heptulosonate 7-phosphate (DAHP) to dehydroquinate (DHQ). This is 3-dehydroquinate synthase from Bacillus cytotoxicus (strain DSM 22905 / CIP 110041 / 391-98 / NVH 391-98).